The sequence spans 341 residues: uncharacterized protein (341 aa).

The next 10 membrane-spanning stretches (helical) occupy residues 10-30 (ALGV…SFLT), 42-62 (PFLI…PWYF), 107-127 (LGFC…LGFT), 129-149 (VASF…LGTI), 155-175 (FTLS…IVVT), 192-212 (ALGN…SVMV), 226-246 (LFFG…LIIL), 263-283 (LIVL…WVIA), 290-310 (LLVT…DILL), and 313-333 (HYLN…FIVV).

The protein belongs to the TPT transporter family.

Its subcellular location is the vacuole membrane. The protein resides in the golgi apparatus membrane. This is an uncharacterized protein from Schizosaccharomyces pombe (strain 972 / ATCC 24843) (Fission yeast).